A 496-amino-acid chain; its full sequence is Chaperone SurA (496 aa).

Positions 1 to 42 are cleaved as a signal peptide; it reads MACKSTAVRSATRVAPTRRLGMVTGALVALMAGAALLPAAHA. Residues 53 to 80 form a disordered region; sequence RGIFTTPDASPSQPLLRGTLPGPSTASG. PpiC domains lie at 235 to 337 and 349 to 447; these read VQEY…KLVD and VAQT…QVEG.

The protein localises to the periplasm. The enzyme catalyses [protein]-peptidylproline (omega=180) = [protein]-peptidylproline (omega=0). In terms of biological role, chaperone involved in the correct folding and assembly of outer membrane proteins. Recognizes specific patterns of aromatic residues and the orientation of their side chains, which are found more frequently in integral outer membrane proteins. May act in both early periplasmic and late outer membrane-associated steps of protein maturation. This chain is Chaperone SurA, found in Ralstonia nicotianae (strain ATCC BAA-1114 / GMI1000) (Ralstonia solanacearum).